The chain runs to 288 residues: MIQIYTAKDIQNLTKNYRKEGKTIGFVPTMGFLHEGHMSLVEKARKDNDIVVMSIFVNPMQFGPGEDYEAYPRDIERDRQLAAGSGVDVLFTPEPEEMYGQEPTVTASVKKRTDVLCGRSREGHFDGVATVLTKLFNLTSPTRVYFGMKDAQQVAVVDGLINDFFMDIELIPVETKREEDGLAKSSRNVNLRAEERQEATALYRALQRGAELIRNGERDPEAVKREIRSILEKTSGVIDYADIYSYPDLEIRDPLTGKVIIAVAVQFSKARLIDNIIVDIPADQKEDL.

30–37 is a binding site for ATP; the sequence is MGFLHEGH. Histidine 37 (proton donor) is an active-site residue. Glutamine 61 is a binding site for (R)-pantoate. Glutamine 61 contributes to the beta-alanine binding site. ATP is bound at residue 147–150; the sequence is GMKD. Glutamine 153 is a (R)-pantoate binding site. An ATP-binding site is contributed by 184–187; that stretch reads KSSR.

The protein belongs to the pantothenate synthetase family. In terms of assembly, homodimer.

The protein resides in the cytoplasm. It carries out the reaction (R)-pantoate + beta-alanine + ATP = (R)-pantothenate + AMP + diphosphate + H(+). It participates in cofactor biosynthesis; (R)-pantothenate biosynthesis; (R)-pantothenate from (R)-pantoate and beta-alanine: step 1/1. Its function is as follows. Catalyzes the condensation of pantoate with beta-alanine in an ATP-dependent reaction via a pantoyl-adenylate intermediate. This Bacillus licheniformis (strain ATCC 14580 / DSM 13 / JCM 2505 / CCUG 7422 / NBRC 12200 / NCIMB 9375 / NCTC 10341 / NRRL NRS-1264 / Gibson 46) protein is Pantothenate synthetase.